Here is a 511-residue protein sequence, read N- to C-terminus: NAD(P)H-quinone oxidoreductase subunit 2 B, chloroplastic (511 aa).

The next 13 membrane-spanning stretches (helical) occupy residues 24 to 44, 57 to 77, 99 to 119, 124 to 144, 149 to 169, 183 to 203, 227 to 247, 295 to 315, 323 to 343, 354 to 374, 395 to 415, 418 to 438, and 484 to 504; these read LLLF…GLIL, IPWL…ALLF, IFQF…VEYI, MAIT…MFLC, LITI…LSGY, YLLM…WLYG, PGIS…LSPA, WHLL…LIAI, MLAY…IVGD, YMLF…LFGL, ALSL…AGFF, LHLF…IGLL, and MIVC…IIAI.

It belongs to the complex I subunit 2 family. NDH is composed of at least 16 different subunits, 5 of which are encoded in the nucleus.

The protein resides in the plastid. Its subcellular location is the chloroplast thylakoid membrane. It catalyses the reaction a plastoquinone + NADH + (n+1) H(+)(in) = a plastoquinol + NAD(+) + n H(+)(out). It carries out the reaction a plastoquinone + NADPH + (n+1) H(+)(in) = a plastoquinol + NADP(+) + n H(+)(out). Functionally, NDH shuttles electrons from NAD(P)H:plastoquinone, via FMN and iron-sulfur (Fe-S) centers, to quinones in the photosynthetic chain and possibly in a chloroplast respiratory chain. The immediate electron acceptor for the enzyme in this species is believed to be plastoquinone. Couples the redox reaction to proton translocation, and thus conserves the redox energy in a proton gradient. The polypeptide is NAD(P)H-quinone oxidoreductase subunit 2 B, chloroplastic (Nandina domestica (Heavenly bamboo)).